A 182-amino-acid polypeptide reads, in one-letter code: Cell wall protein phiA (182 aa).

Residues 1-18 (MKLTSTAALASLAVAATA) form the signal peptide. N57 and N107 each carry an N-linked (GlcNAc...) asparagine glycan.

It belongs to the phiA family. Mainly present in phialides and conidia.

It is found in the secreted. Its subcellular location is the cell wall. Cell wall protein involved in development of asexual structures such as phialide and conidium development, and thus required for spore formation. Plays a role as a general stress protectant produced by the fungus in competition with antagonistic bacteria. The protein is Cell wall protein phiA of Emericella nidulans (strain FGSC A4 / ATCC 38163 / CBS 112.46 / NRRL 194 / M139) (Aspergillus nidulans).